Here is an 83-residue protein sequence, read N- to C-terminus: Cytochrome b559 subunit alpha (83 aa).

A helical membrane pass occupies residues 21–35; the sequence is VIHSITIPSLFIAGW. Position 23 (His23) interacts with heme.

It belongs to the PsbE/PsbF family. In terms of assembly, heterodimer of an alpha subunit and a beta subunit. PSII is composed of 1 copy each of membrane proteins PsbA, PsbB, PsbC, PsbD, PsbE, PsbF, PsbH, PsbI, PsbJ, PsbK, PsbL, PsbM, PsbT, PsbX, PsbY, PsbZ, Psb30/Ycf12, at least 3 peripheral proteins of the oxygen-evolving complex and a large number of cofactors. It forms dimeric complexes. It depends on heme b as a cofactor.

The protein resides in the plastid. It is found in the chloroplast thylakoid membrane. Functionally, this b-type cytochrome is tightly associated with the reaction center of photosystem II (PSII). PSII is a light-driven water:plastoquinone oxidoreductase that uses light energy to abstract electrons from H(2)O, generating O(2) and a proton gradient subsequently used for ATP formation. It consists of a core antenna complex that captures photons, and an electron transfer chain that converts photonic excitation into a charge separation. This chain is Cytochrome b559 subunit alpha, found in Pinus koraiensis (Korean pine).